The sequence spans 96 residues: MSSISLNVLDDSVLIKPISEEKQGGIVLPSSAEKKPTKGEVIAIGEGSRNSSGERVTLTVKAGDKVFYRQWAGTEIEHNDEKLIVMKESDILAVIK.

The protein belongs to the GroES chaperonin family. Heptamer of 7 subunits arranged in a ring. Interacts with the chaperonin GroEL.

Its subcellular location is the cytoplasm. Together with the chaperonin GroEL, plays an essential role in assisting protein folding. The GroEL-GroES system forms a nano-cage that allows encapsulation of the non-native substrate proteins and provides a physical environment optimized to promote and accelerate protein folding. GroES binds to the apical surface of the GroEL ring, thereby capping the opening of the GroEL channel. This Wolbachia sp. subsp. Drosophila simulans (strain wRi) protein is Co-chaperonin GroES.